A 160-amino-acid polypeptide reads, in one-letter code: MSVTLHTNLGDIKCEIFCDEVPKSAENFLALCASGYYDGTIFHRNIKGFMIQGGDPKGTGKGGTSIWGKKFNDEIRDSLKHNARGMLSMANSGPNTNGSQFFITYAKQPHLNGLYTIFGKVIHGFEVLDIMEKTQTGPGDRPLAEIRLNRVTIHANPLAG.

The 151-residue stretch at 3–153 (VTLHTNLGDI…AEIRLNRVTI (151 aa)) folds into the PPIase cyclophilin-type domain.

It belongs to the cyclophilin-type PPIase family. As to expression, ubiquitous.

Its subcellular location is the cytoplasm. It catalyses the reaction [protein]-peptidylproline (omega=180) = [protein]-peptidylproline (omega=0). PPIases accelerate the folding of proteins. It catalyzes the cis-trans isomerization of proline imidic peptide bonds in oligopeptides. The polypeptide is Peptidyl-prolyl cis-trans isomerase CYP18-1 (CYP18-1) (Arabidopsis thaliana (Mouse-ear cress)).